The chain runs to 355 residues: cGAMP-activated phospholipase (355 aa).

The region spanning 17–214 (LSLNGGGARG…VANNPSFIGL (198 aa)) is the PNPLA domain. A GXGXXG motif is present at residues 21-26 (GGGARG). The short motif at 60 to 64 (GTSIG) is the GXSXG element. Ser-62 acts as the Nucleophile in catalysis. Asp-201 serves as the catalytic Proton acceptor. Residues 201–203 (DGG) carry the DGA/G motif.

This sequence belongs to the patatin family.

The catalysed reaction is a 1,2-diacyl-sn-glycero-3-phosphocholine + H2O = a 2-acyl-sn-glycero-3-phosphocholine + a fatty acid + H(+). It catalyses the reaction 1,2-di-(9Z-octadecenoyl)-sn-glycero-3-phosphoethanolamine + 2 H2O = sn-glycero-3-phosphoethanolamine + 2 (9Z)-octadecenoate + 2 H(+). With respect to regulation, phospholipase activity is specifically activated upon 3',3'-cGAMP (cGAMP) binding. Is not activated by the other cyclic dinucleotides 3',3'-cUAMP, 3',3'-c-diAMP and 3',3'-c-diGMP. Therefore, is specifically activated by only the nucleotide synthesized from its adjacently encoded nucleotidyltransferase (DncV). The cGAMP-activation of lipase is inhibited by T4 phage protein Acb2 (Vs.4). Effector phospholipase of a CBASS antiviral system. CBASS (cyclic oligonucleotide-based antiphage signaling system) provides immunity against bacteriophages. The CD-NTase protein (DncV) synthesizes cyclic nucleotides in response to infection; these serve as specific second messenger signals. The signals activate a diverse range of effectors, leading to bacterial cell death and thus abortive phage infection. A type II-A(GA) CBASS system. Its function is as follows. Phospholipase that is activated upon binding to the cyclic dinucleotide (CDN) second messenger 3',3'-cyclic GMP-AMP (3',3'-cGAMP). Then degrades phosphatidylethanolamine (PE) and phosphatidylglycerol (PG), the major phospholipids in the cell membrane of V.cholerae, releasing 16:1 and 18:1 free fatty acids. Upon expression in E.coli with cognate DncV, the cell inner membrane shrinks and separates from the cell wall. In terms of biological role, protects E.coli against phage infection. When the CBASS operon (capV-dncV-cap2-cap3) is introduced in E.coli MG1655 there is about 100-fold protection against phages P1 and T2. When the operon is introduced in E.coli MG1655 there is a more than 10(3) decrease in the efficiency of T2 plaque formation. Protects 100-fold against phage T5, offers no protection against T7. When the operon is introduced in E.coli MG1655 it protects against phages T2, T4, T5 and T6. Another paper shows the operon confers protection against phages P1, T2, T5 and T6 but not T4 or lambda. The polypeptide is cGAMP-activated phospholipase (Vibrio cholerae serotype O1 (strain ATCC 39315 / El Tor Inaba N16961)).